A 1470-amino-acid chain; its full sequence is Roundabout homolog 2 (1470 aa).

The N-terminal stretch at 1–21 (MNPLMFTLLLLFGFLCIQIDG) is a signal peptide. Residues 22–863 (SRLRQEDFPP…EQITDVVKQP (842 aa)) lie on the Extracellular side of the membrane. 5 consecutive Ig-like C2-type domains span residues 31–127 (PRIV…ASLE), 133–220 (DDFR…AELT), 225–309 (PTFL…ATLT), 318–413 (PQFV…LEVT), and 422–508 (PIIL…AVLD). Cysteine 52 and cysteine 110 are joined by a disulfide. An N-linked (GlcNAc...) asparagine glycan is attached at asparagine 123. Disulfide bonds link cysteine 154-cysteine 203, cysteine 246-cysteine 293, and cysteine 339-cysteine 395. The N-linked (GlcNAc...) asparagine glycan is linked to asparagine 430. Cysteine 443 and cysteine 492 are joined by a disulfide. 3 Fibronectin type-III domains span residues 528-622 (PPSK…TQDI), 641-739 (VVVR…TEEA), and 743-840 (PPQS…IGGR). N-linked (GlcNAc...) asparagine glycosylation is found at asparagine 756, asparagine 786, asparagine 793, and asparagine 849. A helical transmembrane segment spans residues 864–884 (AFIAGIGGACWVILMGFSIWL). Residues 885 to 1470 (YWRRKKRKGL…GSNSQGQFTE (586 aa)) lie on the Cytoplasmic side of the membrane. Disordered regions lie at residues 1036–1089 (GFGY…LPGT), 1129–1159 (EDRV…LTPS), 1190–1371 (IQSN…DCPA), and 1383–1470 (DWIN…QFTE). Residues 1144-1158 (PAISFGQQSTATLTP) are compositionally biased toward polar residues. At threonine 1157 the chain carries Phosphothreonine. A Phosphoserine modification is found at serine 1159. Over residues 1194–1203 (TPPPQPPAPP) the composition is skewed to pro residues. The span at 1215–1231 (LETDVPDEDADDEEEPL) shows a compositional bias: acidic residues. Polar residues predominate over residues 1243–1288 (TPGSSMDNLDSSVTGKAFSSSQRQRPTSPFSTDSNTSAAQNQSQRP). A compositionally biased stretch (pro residues) spans 1315-1325 (DLPPPPDPPPG). The span at 1328–1343 (LRQQIGLSQHSGNVEN) shows a compositional bias: polar residues. Over residues 1413-1437 (SKPSFPSPGGHSSSGTSSSKGSTGP) the composition is skewed to low complexity. Over residues 1461–1470 (GSNSQGQFTE) the composition is skewed to polar residues.

This sequence belongs to the immunoglobulin superfamily. ROBO family. As to quaternary structure, interacts with SLIT2. As to expression, expressed in embryonal spinal cord.

It localises to the membrane. In terms of biological role, receptor for SLIT2, and probably SLIT1, which are thought to act as molecular guidance cue in cellular migration, including axonal navigation at the ventral midline of the neural tube and projection of axons to different regions during neuronal development. This is Roundabout homolog 2 (Robo2) from Mus musculus (Mouse).